We begin with the raw amino-acid sequence, 445 residues long: MKKTGSFAEFHVNMIERVMVRPCLPSPKTILPLSAIDNMARAFSNVLLVYAANMDRVSADPAKVIREALSKVLVYYYPFAGRLRNKENGELEVECTGQGVLFLEAMADSDLSVLTDLDNYNPSFQQLIFSLPQDTDIEDLHLLIVQVTRFTCGGFVVGANVYGSACDAKGFGQFLQSMAEMARGEVKPSIEPIWNRELVKLEHCMPFRMSHLQIIHAPVIEEKFVQTSLVINFEIINHIRRRIMEERKESLSSFEIVAALVWLAKIKAFQIPHSENVKLLFAMDLRRSFNPPLPHGYYGNAFGIACAMDNVHDLLSGSLLRTIMIIKKSKFSLHKELNSKTVMSSSVVDVNTKFEDVVSISDWRHSIYYEVDFGWGDAMNVSTMLQQQEHEKSLPTYFSFLQSTKNMPDGIKMLMFMPPSKLKKFKIEIEAMIKKYVTKVCPSKL.

The protein belongs to the plant acyltransferase family.

It catalyses the reaction (3R)-3-amino-3-phenylpropanoyl-CoA + baccatin III = 3'-N-debenzoyl-2'-deoxytaxol + CoA. It participates in alkaloid biosynthesis; taxol biosynthesis. Acyltransferase involved in taxol biosynthesis. Catalyzes the selective 13-O-acylation of baccatin III with (3R)-3-amino-3-phenylpropanoyl-CoA as the acyl donor to form 3'-N-debenzoyl-2'-deoxytaxol. In Taxus cuspidata (Japanese yew), this protein is Baccatin III:3-amino-3-phenylpropanoyltransferase.